The following is a 387-amino-acid chain: Chorismate synthase (387 aa).

NADP(+) contacts are provided by Arg-39 and Arg-45. Residues 130–132, 251–252, Gly-295, 310–314, and Arg-336 contribute to the FMN site; these read RSS, NA, and KPIPT.

This sequence belongs to the chorismate synthase family. Homotetramer. FMNH2 serves as cofactor.

The enzyme catalyses 5-O-(1-carboxyvinyl)-3-phosphoshikimate = chorismate + phosphate. Its pathway is metabolic intermediate biosynthesis; chorismate biosynthesis; chorismate from D-erythrose 4-phosphate and phosphoenolpyruvate: step 7/7. Catalyzes the anti-1,4-elimination of the C-3 phosphate and the C-6 proR hydrogen from 5-enolpyruvylshikimate-3-phosphate (EPSP) to yield chorismate, which is the branch point compound that serves as the starting substrate for the three terminal pathways of aromatic amino acid biosynthesis. This reaction introduces a second double bond into the aromatic ring system. The sequence is that of Chorismate synthase from Exiguobacterium sp. (strain ATCC BAA-1283 / AT1b).